An 88-amino-acid polypeptide reads, in one-letter code: MAVSGLRLTIVWGLLVLILTCQADDKPEGKPDEQPHDSGKNSEPAFPKFLNILGSDIIENAVEFILRSMTRSTEFLEHGDKQGEHSSK.

The first 23 residues, 1–23 (MAVSGLRLTIVWGLLVLILTCQA), serve as a signal peptide directing secretion. Over residues 25–40 (DKPEGKPDEQPHDSGK) the composition is skewed to basic and acidic residues. The tract at residues 25–45 (DKPEGKPDEQPHDSGKNSEPA) is disordered.

The protein resides in the secreted. This is an uncharacterized protein from Bos taurus (Bovine).